A 253-amino-acid polypeptide reads, in one-letter code: MSESSEKTSTTHFGFRQVAAKDKKTLVAEVFTSVSRRYDLMNDLMSLGIHRAWKRYFVATAQVKSGDRVLDLAGGTGDIAMLLKNRVGAEGSIVLGDINASMLSVGRDRLIDRGVVARLDYVQCNAEALPFQDKCFDLVTMSFGLRNVTDKDAALREMFRVLKVGGQARVLEFSAVTAEWFKPIYDFHSFQVLPRLGRLFARDAASYRYLAESIRKHPPQEELQAMMGSAGFERCGYRNLTGGIVAIHSGYKY.

Residues threonine 76, aspartate 97, 125-126 (NA), and serine 142 each bind S-adenosyl-L-methionine.

This sequence belongs to the class I-like SAM-binding methyltransferase superfamily. MenG/UbiE family.

The enzyme catalyses a 2-demethylmenaquinol + S-adenosyl-L-methionine = a menaquinol + S-adenosyl-L-homocysteine + H(+). The catalysed reaction is a 2-methoxy-6-(all-trans-polyprenyl)benzene-1,4-diol + S-adenosyl-L-methionine = a 5-methoxy-2-methyl-3-(all-trans-polyprenyl)benzene-1,4-diol + S-adenosyl-L-homocysteine + H(+). It participates in quinol/quinone metabolism; menaquinone biosynthesis; menaquinol from 1,4-dihydroxy-2-naphthoate: step 2/2. It functions in the pathway cofactor biosynthesis; ubiquinone biosynthesis. In terms of biological role, methyltransferase required for the conversion of demethylmenaquinol (DMKH2) to menaquinol (MKH2) and the conversion of 2-polyprenyl-6-methoxy-1,4-benzoquinol (DDMQH2) to 2-polyprenyl-3-methyl-6-methoxy-1,4-benzoquinol (DMQH2). The protein is Ubiquinone/menaquinone biosynthesis C-methyltransferase UbiE of Xylella fastidiosa (strain M23).